A 248-amino-acid polypeptide reads, in one-letter code: Probable transcriptional regulatory protein OCAR_7305/OCA5_c08120 (248 aa).

This sequence belongs to the TACO1 family.

It localises to the cytoplasm. In Afipia carboxidovorans (strain ATCC 49405 / DSM 1227 / KCTC 32145 / OM5) (Oligotropha carboxidovorans), this protein is Probable transcriptional regulatory protein OCAR_7305/OCA5_c08120.